The chain runs to 201 residues: 3-isopropylmalate dehydratase small subunit (201 aa).

This sequence belongs to the LeuD family. LeuD type 1 subfamily. Heterodimer of LeuC and LeuD.

It catalyses the reaction (2R,3S)-3-isopropylmalate = (2S)-2-isopropylmalate. It participates in amino-acid biosynthesis; L-leucine biosynthesis; L-leucine from 3-methyl-2-oxobutanoate: step 2/4. Functionally, catalyzes the isomerization between 2-isopropylmalate and 3-isopropylmalate, via the formation of 2-isopropylmaleate. The sequence is that of 3-isopropylmalate dehydratase small subunit from Salmonella schwarzengrund (strain CVM19633).